A 228-amino-acid chain; its full sequence is PKHD-type hydroxylase Vapar_1809 (228 aa).

Residues Gln-78–Ser-179 form the Fe2OG dioxygenase domain. Fe cation is bound by residues His-97, Asp-99, and His-160. Position 170 (Arg-170) interacts with 2-oxoglutarate.

It depends on Fe(2+) as a cofactor. The cofactor is L-ascorbate.

The chain is PKHD-type hydroxylase Vapar_1809 from Variovorax paradoxus (strain S110).